The following is a 503-amino-acid chain: Ent-kaurene oxidase-like 5 (503 aa).

The chain crosses the membrane as a helical span at residues 8–28 (GAGGIGVAAAAAVVAATLAVV). Cys-448 serves as a coordination point for heme.

Belongs to the cytochrome P450 family. Heme serves as cofactor. Expressed in roots.

It is found in the membrane. May hydroxylate diterpenes. In Oryza sativa subsp. japonica (Rice), this protein is Ent-kaurene oxidase-like 5.